The primary structure comprises 1031 residues: Pre-mRNA-splicing factor SYF1 (1031 aa).

HAT repeat units lie at residues 28–60 (HLIP…NVKE), 90–122 (DGLQ…TRQS), 214–248 (KNGS…WAEI), and 250–269 (GGDA…PSLT). A disordered region spans residues 346-368 (VEEKVDGEQPQVEGQEQQPQEEP). A compositionally biased stretch (low complexity) spans 353–368 (EQPQVEGQEQQPQEEP). HAT repeat units follow at residues 452 to 487 (GEFE…FSET), 610 to 646 (PDLE…MELR), 664 to 698 (PKNT…LEES), 700 to 732 (GTVE…FLEE), 734 to 768 (KYFE…KFVK), 773 to 807 (KKLE…LEEE), 845 to 879 (FGLP…MERK), and 881 to 915 (GEID…FEIE). 2 disordered regions span residues 948-969 (AAAS…QDAA) and 1003-1031 (TNAN…EDEF).

It belongs to the crooked-neck family. As to quaternary structure, associated with the spliceosome.

It is found in the nucleus. Functionally, involved in pre-mRNA splicing and cell cycle progression. This chain is Pre-mRNA-splicing factor SYF1 (SYF1), found in Cryptococcus neoformans var. neoformans serotype D (strain B-3501A) (Filobasidiella neoformans).